The sequence spans 127 residues: Nuclear transport factor 2 (127 aa).

Positions 11 to 124 (VGKQFVEHYY…FLLINDFFRL (114 aa)) constitute an NTF2 domain.

It localises to the cytoplasm. It is found in the cytosol. The protein resides in the nucleus outer membrane. Its subcellular location is the nucleus. The protein localises to the nuclear pore complex. It localises to the nucleus inner membrane. It is found in the nucleoplasm. In terms of biological role, mediates the import of GDP-bound RAN from the cytoplasm into the nucleus which is essential for the function of RAN in cargo receptor-mediated nucleocytoplasmic transport. Thereby, plays indirectly a more general role in cargo receptor-mediated nucleocytoplasmic transport. Interacts with GDP-bound RAN in the cytosol, recruits it to the nuclear pore complex via its interaction with nucleoporins and promotes its nuclear import. The protein is Nuclear transport factor 2 of Dictyostelium discoideum (Social amoeba).